The following is a 226-amino-acid chain: Large ribosomal subunit protein uL1 (226 aa).

This sequence belongs to the universal ribosomal protein uL1 family. As to quaternary structure, part of the 50S ribosomal subunit.

Its function is as follows. Binds directly to 23S rRNA. The L1 stalk is quite mobile in the ribosome, and is involved in E site tRNA release. Protein L1 is also a translational repressor protein, it controls the translation of the L11 operon by binding to its mRNA. This chain is Large ribosomal subunit protein uL1, found in Mycoplasma mycoides subsp. mycoides SC (strain CCUG 32753 / NCTC 10114 / PG1).